The chain runs to 251 residues: Imidazole glycerol phosphate synthase subunit HisF (251 aa).

Catalysis depends on residues Asp-11 and Asp-130.

The protein belongs to the HisA/HisF family. Heterodimer of HisH and HisF.

The protein localises to the cytoplasm. The catalysed reaction is 5-[(5-phospho-1-deoxy-D-ribulos-1-ylimino)methylamino]-1-(5-phospho-beta-D-ribosyl)imidazole-4-carboxamide + L-glutamine = D-erythro-1-(imidazol-4-yl)glycerol 3-phosphate + 5-amino-1-(5-phospho-beta-D-ribosyl)imidazole-4-carboxamide + L-glutamate + H(+). The protein operates within amino-acid biosynthesis; L-histidine biosynthesis; L-histidine from 5-phospho-alpha-D-ribose 1-diphosphate: step 5/9. In terms of biological role, IGPS catalyzes the conversion of PRFAR and glutamine to IGP, AICAR and glutamate. The HisF subunit catalyzes the cyclization activity that produces IGP and AICAR from PRFAR using the ammonia provided by the HisH subunit. In Metallosphaera sedula (strain ATCC 51363 / DSM 5348 / JCM 9185 / NBRC 15509 / TH2), this protein is Imidazole glycerol phosphate synthase subunit HisF.